Here is an 89-residue protein sequence, read N- to C-terminus: Large ribosomal subunit protein bL28 (89 aa).

The protein belongs to the bacterial ribosomal protein bL28 family.

This is Large ribosomal subunit protein bL28 from Chlamydia felis (strain Fe/C-56) (Chlamydophila felis).